We begin with the raw amino-acid sequence, 101 residues long: NADH-quinone oxidoreductase subunit K (101 aa).

3 helical membrane-spanning segments follow: residues 4 to 24, 30 to 50, and 61 to 81; these read LAHF…GIFL, IVLL…FVAF, and VFVF…LAIL.

Belongs to the complex I subunit 4L family. As to quaternary structure, NDH-1 is composed of 14 different subunits. Subunits NuoA, H, J, K, L, M, N constitute the membrane sector of the complex.

It localises to the cell inner membrane. It catalyses the reaction a quinone + NADH + 5 H(+)(in) = a quinol + NAD(+) + 4 H(+)(out). NDH-1 shuttles electrons from NADH, via FMN and iron-sulfur (Fe-S) centers, to quinones in the respiratory chain. The immediate electron acceptor for the enzyme in this species is believed to be ubiquinone. Couples the redox reaction to proton translocation (for every two electrons transferred, four hydrogen ions are translocated across the cytoplasmic membrane), and thus conserves the redox energy in a proton gradient. The polypeptide is NADH-quinone oxidoreductase subunit K (Cupriavidus taiwanensis (strain DSM 17343 / BCRC 17206 / CCUG 44338 / CIP 107171 / LMG 19424 / R1) (Ralstonia taiwanensis (strain LMG 19424))).